The primary structure comprises 347 residues: Chaperone protein DnaJ 1 (347 aa).

Residues aspartate 5–alanine 75 enclose the J domain. The span at alanine 68–aspartate 77 shows a compositional bias: low complexity. Residues alanine 68–alanine 91 form a disordered region. A CR-type zinc finger spans residues glycine 107–alanine 181. Positions 120, 123, 137, 140, 155, 158, 169, and 172 each coordinate Zn(2+). 4 CXXCXGXG motif repeats span residues cysteine 120 to glycine 127, cysteine 137 to glycine 144, cysteine 155 to glycine 162, and cysteine 169 to glycine 176.

Belongs to the DnaJ family. In terms of assembly, homodimer. It depends on Zn(2+) as a cofactor.

Its subcellular location is the cytoplasm. Its function is as follows. Participates actively in the response to hyperosmotic and heat shock by preventing the aggregation of stress-denatured proteins and by disaggregating proteins, also in an autonomous, DnaK-independent fashion. Unfolded proteins bind initially to DnaJ; upon interaction with the DnaJ-bound protein, DnaK hydrolyzes its bound ATP, resulting in the formation of a stable complex. GrpE releases ADP from DnaK; ATP binding to DnaK triggers the release of the substrate protein, thus completing the reaction cycle. Several rounds of ATP-dependent interactions between DnaJ, DnaK and GrpE are required for fully efficient folding. Also involved, together with DnaK and GrpE, in the DNA replication of plasmids through activation of initiation proteins. This chain is Chaperone protein DnaJ 1, found in Aromatoleum aromaticum (strain DSM 19018 / LMG 30748 / EbN1) (Azoarcus sp. (strain EbN1)).